We begin with the raw amino-acid sequence, 434 residues long: Methyl-coenzyme M reductase subunit beta (434 aa).

Tyr365 contacts coenzyme M. Gly367 serves as a coordination point for coenzyme B.

This sequence belongs to the methyl-coenzyme M reductase beta subunit family. In terms of assembly, MCR is a hexamer of two alpha, two beta, and two gamma chains, forming a dimer of heterotrimers. Coenzyme F430 serves as cofactor.

It localises to the cytoplasm. It carries out the reaction coenzyme B + methyl-coenzyme M = methane + coenzyme M-coenzyme B heterodisulfide. It participates in one-carbon metabolism; methyl-coenzyme M reduction; methane from methyl-coenzyme M: step 1/1. In terms of biological role, component of the methyl-coenzyme M reductase (MCR) I that catalyzes the reductive cleavage of methyl-coenzyme M (CoM-S-CH3 or 2-(methylthio)ethanesulfonate) using coenzyme B (CoB or 7-mercaptoheptanoylthreonine phosphate) as reductant which results in the production of methane and the mixed heterodisulfide of CoB and CoM (CoM-S-S-CoB). This is the final step in methanogenesis. This is Methyl-coenzyme M reductase subunit beta (mcrB) from Methanosarcina barkeri (strain Fusaro / DSM 804).